Here is a 301-residue protein sequence, read N- to C-terminus: Radial spoke head 1 homolog (301 aa).

The span at 1 to 20 shows a compositional bias: acidic residues; it reads MSDLGSEELEEEGENDLGEY. The tract at residues 1–41 is disordered; the sequence is MSDLGSEELEEEGENDLGEYEGERNEVGERHGHGKARLPNG. MORN repeat units follow at residues 20-43, 44-66, 67-89, 90-112, 113-135, and 159-181; these read YEGERNEVGERHGHGKARLPNGDT, YEGSYEFGKRHGQGTYKFKNGAR, YTGDYVKNKKHGQGTFIYPDGSR, YEGEWADDQRHGQGVYYYVNNDT, YTGEWFNHQRHGQGTYLYAETGS, and YQGKFMNKNPVGPGKYVFDIGCE. Residues 21–31 are compositionally biased toward basic and acidic residues; it reads EGERNEVGERH. Residues 225–301 form a disordered region; the sequence is LSEEQPPPEG…FDEEPSDLQD (77 aa). Residues 249–261 show a composition bias toward acidic residues; it reads PSEDIQAEGFEGE. Residues 262 to 278 show a composition bias toward basic and acidic residues; the sequence is LEPRGADEDVDTFRQES. The span at 279–290 shows a compositional bias: polar residues; the sequence is QENSYDIDQGNL. The segment covering 292–301 has biased composition (acidic residues); that stretch reads FDEEPSDLQD.

In terms of assembly, component of the axonemal radial spoke 1 (RS1) and 2 (RS2) complexes, at least composed of spoke head proteins RSPH1, RSPH3, RSPH9 and the cilia-specific component RSPH4A or sperm-specific component RSPH6A, spoke stalk proteins RSPH14, DNAJB13, DYDC1, ROPN1L and NME5, and the RS1 complex-specific anchor protein IQUB. Interacts with RSPH3B. Interacts with RSPH4A. Interacts with RSPH6A. Expressed in the trachea, ependymal cells, oviduct and ependymal cells (at protein level). Germ cell specific. Specifically expressed in testis, and to a lower extent in ovary. Not expressed in somatic tissues.

It is found in the cytoplasm. The protein resides in the chromosome. Its subcellular location is the cytoskeleton. The protein localises to the cilium axoneme. It localises to the flagellum axoneme. Functions as part of axonemal radial spoke complexes that play an important part in the motility of sperm and cilia. This Mus musculus (Mouse) protein is Radial spoke head 1 homolog (Rsph1).